Consider the following 240-residue polypeptide: Probable transcriptional regulatory protein MS53_0373 (240 aa).

Belongs to the TACO1 family.

It is found in the cytoplasm. This chain is Probable transcriptional regulatory protein MS53_0373, found in Mycoplasmopsis synoviae (strain 53) (Mycoplasma synoviae).